Here is a 429-residue protein sequence, read N- to C-terminus: MPKRKAAGDASQEPKRRSARLSAMPVPFTPELKPKRASTSRKTKTTNVVEESKDAGATTIPETKPEVVKGECNMENAENGEAKIIEAPISKMETEEVKEQINEDTEGDGGEKKEAVVTKGKNDELEANIQDVEKDEDEKEHEDTGEEGEDGEREGGLKEKPDVAEIEDAKEAKDDEEKEDKEKEDDKGGDGKKEEEKDDEGEAETEEEVKEQQKEETEGDDGKCKVEENKEGRKESQHEEEGKEELHEEDGKEDLHEEDGKEDLHEEDGKEDLHEEEGKEDLHEEEGKEDLHEEEGKEDLHEEEGKEDLHEEEGKEDLHEEEGKEDLHEEEGKEDLHEEDGKEGQHEEEGKEDLHEEEGKEDLHEEDGKEGQHEEDGKKKADGNEDRKEEEEQEAATEGNDENKVEVEEEADNKDFKEDGEKGEPVSTV.

The segment at 1-429 (MPKRKAAGDA…GEKGEPVSTV (429 aa)) is disordered. Threonine 29 is subject to Phosphothreonine. The segment covering 35 to 44 (KRASTSRKTK) has biased composition (basic residues). Lysine 64 participates in a covalent cross-link: Glycyl lysine isopeptide (Lys-Gly) (interchain with G-Cter in SUMO2). Serine 90 carries the phosphoserine modification. Basic and acidic residues-rich tracts occupy residues 92-101 (METEEVKEQI) and 109-124 (GGEK…KNDE). Lysine 98 participates in a covalent cross-link: Glycyl lysine isopeptide (Lys-Gly) (interchain with G-Cter in SUMO1); alternate. A Glycyl lysine isopeptide (Lys-Gly) (interchain with G-Cter in SUMO2); alternate cross-link involves residue lysine 98. Residue lysine 121 forms a Glycyl lysine isopeptide (Lys-Gly) (interchain with G-Cter in SUMO2) linkage. Residues 133 to 152 (EKDEDEKEHEDTGEEGEDGE) show a composition bias toward acidic residues. The segment covering 153-195 (REGGLKEKPDVAEIEDAKEAKDDEEKEDKEKEDDKGGDGKKEE) has biased composition (basic and acidic residues). Over residues 196 to 209 (EKDDEGEAETEEEV) the composition is skewed to acidic residues. Composition is skewed to basic and acidic residues over residues 210-387 (KEQQ…NEDR) and 413-429 (NKDF…VSTV).

The protein belongs to the HMGN family. Expressed in trophoblast giant cells.

It localises to the nucleus. In terms of biological role, preferentially binds to euchromatin and modulates cellular transcription by counteracting linker histone-mediated chromatin compaction. This chain is High mobility group nucleosome-binding domain-containing protein 5, found in Rattus norvegicus (Rat).